A 126-amino-acid chain; its full sequence is S-adenosylmethionine decarboxylase proenzyme (126 aa).

Serine 63 acts as the Schiff-base intermediate with substrate; via pyruvic acid in catalysis. A Pyruvic acid (Ser); by autocatalysis modification is found at serine 63. The active-site Proton acceptor; for processing activity is the histidine 68. Residue cysteine 83 is the Proton donor; for catalytic activity of the active site.

The protein belongs to the prokaryotic AdoMetDC family. Type 1 subfamily. As to quaternary structure, heterotetramer of two alpha and two beta chains arranged as a dimer of alpha/beta heterodimers. Requires pyruvate as cofactor. In terms of processing, is synthesized initially as an inactive proenzyme. Formation of the active enzyme involves a self-maturation process in which the active site pyruvoyl group is generated from an internal serine residue via an autocatalytic post-translational modification. Two non-identical subunits are generated from the proenzyme in this reaction, and the pyruvate is formed at the N-terminus of the alpha chain, which is derived from the carboxyl end of the proenzyme. The post-translation cleavage follows an unusual pathway, termed non-hydrolytic serinolysis, in which the side chain hydroxyl group of the serine supplies its oxygen atom to form the C-terminus of the beta chain, while the remainder of the serine residue undergoes an oxidative deamination to produce ammonia and the pyruvoyl group blocking the N-terminus of the alpha chain.

The enzyme catalyses S-adenosyl-L-methionine + H(+) = S-adenosyl 3-(methylsulfanyl)propylamine + CO2. It functions in the pathway amine and polyamine biosynthesis; S-adenosylmethioninamine biosynthesis; S-adenosylmethioninamine from S-adenosyl-L-methionine: step 1/1. Functionally, catalyzes the decarboxylation of S-adenosylmethionine to S-adenosylmethioninamine (dcAdoMet), the propylamine donor required for the synthesis of the polyamines spermine and spermidine from the diamine putrescine. In Syntrophomonas wolfei subsp. wolfei (strain DSM 2245B / Goettingen), this protein is S-adenosylmethionine decarboxylase proenzyme.